Reading from the N-terminus, the 283-residue chain is Movement protein (283 aa).

This sequence belongs to the tenuiviruses pc4 protein family.

Transports viral genome to neighboring plant cells directly through plasmosdesmata, without any budding. The movement protein allows efficient cell to cell propagation, by bypassing the host cell wall barrier. The sequence is that of Movement protein from Maize stripe virus (MStV).